Here is a 432-residue protein sequence, read N- to C-terminus: Adenosylhomocysteinase (432 aa).

S2 carries the N-acetylserine modification. Substrate is bound by residues T57, D131, and E156. At S183 the chain carries Phosphoserine. Residues 183–350 form an NAD binding region; the sequence is SVTKSKFDNL…EGRLVNLGCA (168 aa). Residues K186 and D190 each coordinate substrate. K186 carries the post-translational modification N6-(2-hydroxyisobutyryl)lysine. Y193 is subject to Phosphotyrosine.

It belongs to the adenosylhomocysteinase family. In terms of assembly, homotetramer. Interaction with AHCYL1. NAD(+) is required as a cofactor.

It localises to the cytoplasm. The protein localises to the melanosome. It is found in the nucleus. The protein resides in the endoplasmic reticulum. The enzyme catalyses S-adenosyl-L-homocysteine + H2O = L-homocysteine + adenosine. It functions in the pathway amino-acid biosynthesis; L-homocysteine biosynthesis; L-homocysteine from S-adenosyl-L-homocysteine: step 1/1. Catalyzes the hydrolysis of S-adenosyl-L-homocysteine to form adenosine and homocysteine. Binds copper ions. The sequence is that of Adenosylhomocysteinase (AHCY) from Macaca fascicularis (Crab-eating macaque).